A 293-amino-acid chain; its full sequence is Glycine N-methyltransferase (293 aa).

Val-2 carries the N-acetylvaline modification. 2 residues coordinate (6S)-5-methyl-5,6,7,8-tetrahydrofolate: Ser-4 and Tyr-6. A Phosphoserine modification is found at Ser-10. Positions 22, 31, 34, and 41 each coordinate S-adenosyl-L-methionine. Tyr-34 carries the phosphotyrosine modification. At Lys-46 the chain carries N6-succinyllysine. Residues Ala-65, 86 to 88 (DAS), 117 to 118 (NW), 137 to 140 (LGNS), and Arg-176 contribute to the S-adenosyl-L-methionine site. N6-succinyllysine occurs at positions 191, 196, and 201. His-215 lines the (6S)-5-methyl-5,6,7,8-tetrahydrofolate pocket. S-adenosyl-L-methionine is bound at residue Tyr-221. A (6S)-5-methyl-5,6,7,8-tetrahydrofolate-binding site is contributed by Arg-240.

It belongs to the class I-like SAM-binding methyltransferase superfamily. Glycine N-methyltransferase family. In terms of assembly, homotetramer. Abundant in liver.

Its subcellular location is the cytoplasm. The catalysed reaction is glycine + S-adenosyl-L-methionine = sarcosine + S-adenosyl-L-homocysteine + H(+). Its activity is regulated as follows. Inhibited by 5-methyltetrahydrofolate monoglutamate and by 5-methyltetrahydrofolate pentaglutamate, inhibition is much more effective by the pentaglutamate form than by the monoglutamate form. Two molecules of 5-methyltetrahydrofolate are bound per tetramer. The binding sites are localized between subunits. Inhibitor binding may preclude movements of the polypeptide chain that are necessary for enzyme activity. Its function is as follows. Catalyzes the methylation of glycine by using S-adenosylmethionine (AdoMet) to form N-methylglycine (sarcosine) with the concomitant production of S-adenosylhomocysteine (AdoHcy), a reaction regulated by the binding of 5-methyltetrahydrofolate. Possible crucial role in the regulation of tissue concentration of AdoMet and of metabolism of methionine. This is Glycine N-methyltransferase (Gnmt) from Rattus norvegicus (Rat).